We begin with the raw amino-acid sequence, 746 residues long: Exostosin-1 (746 aa).

Over 1–7 the chain is Cytoplasmic; the sequence is MQAKKRY. The chain crosses the membrane as a helical; Signal-anchor for type II membrane protein span at residues 8–28; the sequence is FILLSAGSCLALLFYFGGLQF. Over 29–746 the chain is Lumenal; it reads RASRSHSRRE…RKKYRDIERL (718 aa). Asparagine 89 carries an N-linked (GlcNAc...) asparagine glycan. 2 cysteine pairs are disulfide-bonded: cysteine 98–cysteine 103 and cysteine 109–cysteine 152. Residues leucine 166 and tyrosine 203 each coordinate a protein. Residues lysine 267, lysine 269, tyrosine 271, and arginine 280 each coordinate UDP. Residues cysteine 298 and cysteine 312 are joined by a disulfide bond. Histidine 300 lines the a protein pocket. Residues tyrosine 319 and tyrosine 324 each contribute to the UDP site. N-linked (GlcNAc...) asparagine glycosylation is present at asparagine 330. Cystine bridges form between cysteine 334–cysteine 355 and cysteine 652–cysteine 704. UDP-binding residues include arginine 346 and glutamate 349.

It belongs to the glycosyltransferase 47 family. As to quaternary structure, part of the heparan sulfate polymerase, a dimeric complex composed of EXT1 and EXT2. Could also form homooligomeric complexes. Interacts with NDST1. N-glycosylated.

It localises to the golgi apparatus membrane. Its subcellular location is the golgi apparatus. The protein localises to the cis-Golgi network membrane. The protein resides in the endoplasmic reticulum membrane. The enzyme catalyses 3-O-{alpha-D-GlcNAc-[(1-&gt;4)-beta-D-GlcA-(1-&gt;4)-alpha-D-GlcNAc](n)-(1-&gt;4)-beta-D-GlcA-(1-&gt;3)-beta-D-Gal-(1-&gt;3)-beta-D-Gal-(1-&gt;4)-beta-D-Xyl}-L-seryl-[protein] + UDP-alpha-D-glucuronate = 3-O-{[(1-&gt;4)-beta-D-GlcA-(1-&gt;4)-alpha-D-GlcNAc](n+1)-(1-&gt;4)-beta-D-GlcA-(1-&gt;3)-beta-D-Gal-(1-&gt;3)-beta-D-Gal-(1-&gt;4)-beta-D-Xyl}-L-seryl-[protein] + UDP + H(+). The protein operates within protein modification; protein glycosylation. Functionally, glycosyltransferase forming with EXT2 the heterodimeric heparan sulfate polymerase which catalyzes the elongation of the heparan sulfate glycan backbone. Glycan backbone extension consists in the alternating transfer of (1-&gt;4)-beta-D-GlcA and (1-&gt;4)-alpha-D-GlcNAc residues from their respective UDP-sugar donors. Both EXT1 and EXT2 are required for the full activity of the polymerase since EXT1 bears the N-acetylglucosaminyl-proteoglycan 4-beta-glucuronosyltransferase activity within the complex while EXT2 carries the glucuronosyl-N-acetylglucosaminyl-proteoglycan 4-alpha-N-acetylglucosaminyltransferase activity. Heparan sulfate proteoglycans are ubiquitous components of the extracellular matrix and play an important role in tissue homeostasis and signaling. In Bos taurus (Bovine), this protein is Exostosin-1 (EXT1).